Consider the following 356-residue polypeptide: A-type ATP synthase subunit C (356 aa).

The protein belongs to the V-ATPase V0D/AC39 subunit family. Has multiple subunits with at least A(3), B(3), C, D, E, F, H, I and proteolipid K(x).

It is found in the cell membrane. Functionally, component of the A-type ATP synthase that produces ATP from ADP in the presence of a proton gradient across the membrane. The polypeptide is A-type ATP synthase subunit C (Thermoplasma acidophilum (strain ATCC 25905 / DSM 1728 / JCM 9062 / NBRC 15155 / AMRC-C165)).